The primary structure comprises 318 residues: Biotin synthase (318 aa).

Residues 46 to 272 (DGVDVEQLNN…RSVVKISGGR (227 aa)) form the Radical SAM core domain. The [4Fe-4S] cluster site is built by C61, C65, and C68. Residues C105, C138, C197, and K267 each contribute to the [2Fe-2S] cluster site.

It belongs to the radical SAM superfamily. Biotin synthase family. Homodimer. It depends on [4Fe-4S] cluster as a cofactor. Requires [2Fe-2S] cluster as cofactor.

It catalyses the reaction (4R,5S)-dethiobiotin + (sulfur carrier)-SH + 2 reduced [2Fe-2S]-[ferredoxin] + 2 S-adenosyl-L-methionine = (sulfur carrier)-H + biotin + 2 5'-deoxyadenosine + 2 L-methionine + 2 oxidized [2Fe-2S]-[ferredoxin]. The protein operates within cofactor biosynthesis; biotin biosynthesis; biotin from 7,8-diaminononanoate: step 2/2. In terms of biological role, catalyzes the conversion of dethiobiotin (DTB) to biotin by the insertion of a sulfur atom into dethiobiotin via a radical-based mechanism. This Cenarchaeum symbiosum (strain A) protein is Biotin synthase.